The sequence spans 676 residues: Lon-like protease BrxL (676 aa).

This sequence belongs to the BrxL family.

In terms of biological role, BREX systems (bacteriophage exclusion) provide immunity against bacteriophage. Part of a type 1 BREX system. This system allows phage adsorption but prevents phage DNA replication, without degradation of the phage DNA. Methylation of bacterial DNA by PglX probably guides self/non-self discrimination. When the brxA-brxB-brxC-pglX and pglZ-brxL operons are transformed into a susceptible B.subtilis strain (BEST7003) they confer resistance to bacteriophages SPbeta, SP16, Zeta, phi3T and SP02 and partial protection to phages SP01 and SP82G (these include lytic and temperate phage). They do not protect against phages phi105, rho10 or rho14. Additionally confers a very slight reduction in efficiency of plasmid transformation. The sequence is that of Lon-like protease BrxL from Bacillus cereus (strain H3081.97).